The following is a 70-amino-acid chain: UPF0519 protein B (70 aa).

The protein belongs to the UPF0519 family.

This Dictyostelium discoideum (Social amoeba) protein is UPF0519 protein B (sigN122).